The sequence spans 417 residues: Fatty-acid peroxygenase (417 aa).

Cys-363 lines the heme pocket.

This sequence belongs to the cytochrome P450 family. Requires heme as cofactor.

It catalyses the reaction a 1,2-saturated fatty acid + H2O2 = a 2-hydroxy fatty acid + H2O. The enzyme catalyses a 2,3-saturated fatty acid + H2O2 = a 3-hydroxy fatty acid + H2O. It carries out the reaction tetradecanoate + H2O2 = (3R)-hydroxytetradecanoate + H2O. The catalysed reaction is tetradecanoate + H2O2 = (2R)-hydroxytetradecanoate + H2O. It catalyses the reaction tetradecanoate + H2O2 = (2S)-hydroxytetradecanoate + H2O. Its function is as follows. Catalyzes the alpha- and beta-hydroxylation of myristic acid in the presence of hydrogen peroxide. The polypeptide is Fatty-acid peroxygenase (cypC) (Bacillus subtilis (strain 168)).